Consider the following 184-residue polypeptide: Large ribosomal subunit protein uL22A (184 aa).

Residue lysine 46 forms a Glycyl lysine isopeptide (Lys-Gly) (interchain with G-Cter in ubiquitin) linkage. Position 70 is a phosphothreonine (threonine 70).

It belongs to the universal ribosomal protein uL22 family. In terms of assembly, component of the large ribosomal subunit (LSU). Mature yeast ribosomes consist of a small (40S) and a large (60S) subunit. The 40S small subunit contains 1 molecule of ribosomal RNA (18S rRNA) and 33 different proteins (encoded by 57 genes). The large 60S subunit contains 3 rRNA molecules (25S, 5.8S and 5S rRNA) and 46 different proteins (encoded by 81 genes). uL22 is associated with the polypeptide exit tunnel.

Its subcellular location is the cytoplasm. Functionally, component of the ribosome, a large ribonucleoprotein complex responsible for the synthesis of proteins in the cell. The small ribosomal subunit (SSU) binds messenger RNAs (mRNAs) and translates the encoded message by selecting cognate aminoacyl-transfer RNA (tRNA) molecules. The large subunit (LSU) contains the ribosomal catalytic site termed the peptidyl transferase center (PTC), which catalyzes the formation of peptide bonds, thereby polymerizing the amino acids delivered by tRNAs into a polypeptide chain. The nascent polypeptides leave the ribosome through a tunnel in the LSU and interact with protein factors that function in enzymatic processing, targeting, and the membrane insertion of nascent chains at the exit of the ribosomal tunnel. The sequence is that of Large ribosomal subunit protein uL22A from Saccharomyces cerevisiae (strain ATCC 204508 / S288c) (Baker's yeast).